A 611-amino-acid chain; its full sequence is Protein Spindly (611 aa).

Positions 1 to 288 (MEESETVLKL…QFQSLQKQHA (288 aa)) form a coiled coil. Positions 499 to 511 (LKEDSSLSTKEQD) are enriched in basic and acidic residues. A disordered region spans residues 499-611 (LKEDSSLSTK…PAATTQCPQQ (113 aa)). Residues 549–567 (RNTNNCSVTSTSPRSASEE) show a composition bias toward polar residues. The segment covering 570–583 (SESKRFDEEQEKRK) has biased composition (basic and acidic residues).

This sequence belongs to the Spindly family.

The protein resides in the chromosome. It is found in the centromere. It localises to the kinetochore. Functionally, required for the localization of dynein and dynactin to the mitotic kintochore. Dynein is believed to control the initial lateral interaction between the kinetochore and spindle microtubules and to facilitate the subsequent formation of end-on kinetochore-microtubule attachments mediated by the NDC80 complex. May act as an adapter protein linking the dynein motor complex to various cargos. In Xenopus tropicalis (Western clawed frog), this protein is Protein Spindly (spdl1).